Consider the following 341-residue polypeptide: GTP 3',8-cyclase (341 aa).

The Radical SAM core domain occupies 11-231 (KRNRPLRDLR…DLINKHMPVE (221 aa)). Residue arginine 20 coordinates GTP. [4Fe-4S] cluster contacts are provided by cysteine 27 and cysteine 31. Tyrosine 33 contributes to the S-adenosyl-L-methionine binding site. Cysteine 34 provides a ligand contact to [4Fe-4S] cluster. Arginine 75 is a binding site for GTP. Glycine 79 is an S-adenosyl-L-methionine binding site. Threonine 106 contacts GTP. Serine 130 is an S-adenosyl-L-methionine binding site. GTP is bound at residue lysine 167. Methionine 201 contacts S-adenosyl-L-methionine. Cysteine 265 and cysteine 268 together coordinate [4Fe-4S] cluster. 270–272 (RAR) is a binding site for GTP. Cysteine 282 serves as a coordination point for [4Fe-4S] cluster.

The protein belongs to the radical SAM superfamily. MoaA family. In terms of assembly, monomer and homodimer. Requires [4Fe-4S] cluster as cofactor.

It carries out the reaction GTP + AH2 + S-adenosyl-L-methionine = (8S)-3',8-cyclo-7,8-dihydroguanosine 5'-triphosphate + 5'-deoxyadenosine + L-methionine + A + H(+). It functions in the pathway cofactor biosynthesis; molybdopterin biosynthesis. Catalyzes the cyclization of GTP to (8S)-3',8-cyclo-7,8-dihydroguanosine 5'-triphosphate. Required for both nitrate assimilation and respiration. This is GTP 3',8-cyclase from Bacillus subtilis (strain 168).